Reading from the N-terminus, the 526-residue chain is Probable polyol transporter 4 (526 aa).

Disordered stretches follow at residues 1 to 21 (MMKN…AVSV) and 28 to 47 (YQRM…AEAR). A compositionally biased stretch (basic and acidic residues) spans 29–47 (QRMDSDAEESQNHREAEAR). 12 helical membrane-spanning segments follow: residues 63–83 (SLNN…VLFI), 92–112 (VQTE…SLAG), 125–145 (MALA…APSF), 153–173 (TLAG…IAEI), 180–200 (GFFT…GYVS), 215–235 (IMLA…CVIP), 300–320 (MLIV…DATV), 340–360 (AATV…TFLI), 371–391 (VSTI…TFLG), 395–415 (LGIT…SIGM), 437–457 (ALGA…FLSV), and 465–485 (GTFF…YVLV).

Belongs to the major facilitator superfamily. Sugar transporter (TC 2.A.1.1) family.

The protein localises to the membrane. Functionally, plasma membrane sugar-proton symporter. This is Probable polyol transporter 4 (PLT4) from Arabidopsis thaliana (Mouse-ear cress).